We begin with the raw amino-acid sequence, 548 residues long: Chaperonin GroEL (548 aa).

ATP contacts are provided by residues 30–33 (TLGP), lysine 51, 87–91 (DGTTT), glycine 415, and aspartate 496.

This sequence belongs to the chaperonin (HSP60) family. As to quaternary structure, forms a cylinder of 14 subunits composed of two heptameric rings stacked back-to-back. Interacts with the co-chaperonin GroES.

The protein resides in the cytoplasm. The catalysed reaction is ATP + H2O + a folded polypeptide = ADP + phosphate + an unfolded polypeptide.. In terms of biological role, together with its co-chaperonin GroES, plays an essential role in assisting protein folding. The GroEL-GroES system forms a nano-cage that allows encapsulation of the non-native substrate proteins and provides a physical environment optimized to promote and accelerate protein folding. The sequence is that of Chaperonin GroEL from Haemophilus influenzae (strain ATCC 51907 / DSM 11121 / KW20 / Rd).